A 376-amino-acid chain; its full sequence is N-acetyldiaminopimelate deacetylase (376 aa).

Asp-69 is a catalytic residue. Glu-128 serves as the catalytic Proton acceptor.

This sequence belongs to the peptidase M20A family. N-acetyldiaminopimelate deacetylase subfamily.

The catalysed reaction is N-acetyl-(2S,6S)-2,6-diaminopimelate + H2O = (2S,6S)-2,6-diaminopimelate + acetate. Its pathway is amino-acid biosynthesis; L-lysine biosynthesis via DAP pathway; LL-2,6-diaminopimelate from (S)-tetrahydrodipicolinate (acetylase route): step 3/3. In terms of biological role, catalyzes the conversion of N-acetyl-diaminopimelate to diaminopimelate and acetate. This chain is N-acetyldiaminopimelate deacetylase, found in Streptococcus uberis (strain ATCC BAA-854 / 0140J).